The following is a 117-amino-acid chain: Large ribosomal subunit protein bL19 (117 aa).

The protein belongs to the bacterial ribosomal protein bL19 family.

This protein is located at the 30S-50S ribosomal subunit interface and may play a role in the structure and function of the aminoacyl-tRNA binding site. The chain is Large ribosomal subunit protein bL19 from Colwellia psychrerythraea (strain 34H / ATCC BAA-681) (Vibrio psychroerythus).